A 308-amino-acid chain; its full sequence is N-acetylmuramic acid 6-phosphate etherase (308 aa).

An SIS domain is found at 62–225 (ITDAFKVGGR…TTASMIRLGK (164 aa)). Catalysis depends on E90, which acts as the Proton donor. E121 is a catalytic residue.

This sequence belongs to the GCKR-like family. MurNAc-6-P etherase subfamily. As to quaternary structure, homodimer.

It carries out the reaction N-acetyl-D-muramate 6-phosphate + H2O = N-acetyl-D-glucosamine 6-phosphate + (R)-lactate. It participates in amino-sugar metabolism; 1,6-anhydro-N-acetylmuramate degradation. It functions in the pathway amino-sugar metabolism; N-acetylmuramate degradation. Its pathway is cell wall biogenesis; peptidoglycan recycling. In terms of biological role, specifically catalyzes the cleavage of the D-lactyl ether substituent of MurNAc 6-phosphate, producing GlcNAc 6-phosphate and D-lactate. Together with AnmK, is also required for the utilization of anhydro-N-acetylmuramic acid (anhMurNAc) either imported from the medium or derived from its own cell wall murein, and thus plays a role in cell wall recycling. The protein is N-acetylmuramic acid 6-phosphate etherase of Vibrio campbellii (strain ATCC BAA-1116).